Here is a 200-residue protein sequence, read N- to C-terminus: Peptidyl-tRNA hydrolase (200 aa).

Residue Tyr-23 participates in tRNA binding. Residue His-28 is the Proton acceptor of the active site. TRNA is bound by residues Phe-79, Asn-81, and Asn-127.

The protein belongs to the PTH family. In terms of assembly, monomer.

It localises to the cytoplasm. It carries out the reaction an N-acyl-L-alpha-aminoacyl-tRNA + H2O = an N-acyl-L-amino acid + a tRNA + H(+). Its function is as follows. Hydrolyzes ribosome-free peptidyl-tRNAs (with 1 or more amino acids incorporated), which drop off the ribosome during protein synthesis, or as a result of ribosome stalling. In terms of biological role, catalyzes the release of premature peptidyl moieties from peptidyl-tRNA molecules trapped in stalled 50S ribosomal subunits, and thus maintains levels of free tRNAs and 50S ribosomes. This chain is Peptidyl-tRNA hydrolase, found in Streptomyces coelicolor (strain ATCC BAA-471 / A3(2) / M145).